Here is a 777-residue protein sequence, read N- to C-terminus: BRCA1-associated RING domain protein 1 (777 aa).

The disordered stretch occupies residues 1 to 32 (MPDNRQPRNRQPRIRSGNEPRSAPAMEPDGRG). Residues 26–119 (MEPDGRGAWA…KLRNLLHDNE (94 aa)) form an interaction with BRCA1 region. An RING-type zinc finger spans residues 50 to 87 (CSRCTNILREPVCLGGCEHIFCSNCVSDCIGTGCPVCY). Glycyl lysine isopeptide (Lys-Gly) (interchain with G-Cter in SUMO2) cross-links involve residues Lys-160 and Lys-170. The tract at residues 167-211 (PAIKKDASAQQDSYEFVSPSPPADVSERAKKASARSGKKQKKKTL) is disordered. Ser-186 bears the Phosphoserine mark. Over residues 197-209 (KASARSGKKQKKK) the composition is skewed to basic residues. Position 299 is a phosphothreonine (Thr-299). Residues 356-404 (NIPLPECSSPPSCKRKVGGTSGRKNSNMSDEFISLSPGTPPSTLSSSSY) are disordered. Residues 389–404 (SLSPGTPPSTLSSSSY) are compositionally biased toward low complexity. Ser-391 is modified (phosphoserine). A Phosphothreonine modification is found at Thr-394. A Glycyl lysine isopeptide (Lys-Gly) (interchain with G-Cter in SUMO2) cross-link involves residue Lys-423. 3 ANK repeats span residues 427–459 (RGET…VKDH), 460–492 (AGWT…TTGY), and 493–525 (QNDS…AVNI). The stretch at 526-546 (FGLRPVDYTDDESMKSLLLLP) is one ANK 4; degenerate repeat. Lys-548 participates in a covalent cross-link: Glycyl lysine isopeptide (Lys-Gly) (interchain with G-Cter in SUMO2). The tract at residues 554-558 (ASHCS) is flexible linker. BRCT domains are found at residues 560-653 (MNTG…KYEI) and 667-777 (LLPK…PLDS).

As to quaternary structure, homo- and heterodimer. Heterodimer (RING-type zinc finger) with BRCA1. Heterodimer (via ANK repeats and BRCT domains) with CSTF1/CSTF-50. Component of the BRCA1-A complex, at least composed of the BRCA1, BARD1, UIMC1/RAP80, ABRAXAS1, BRCC3/BRCC36, BABAM2 and BABAM1/NBA1. Interacts with UBXN1. Post-translationally, processed during apoptosis. The homodimer is more susceptible to proteolytic cleavage than the BARD1/BRCA1 heterodimer.

The protein resides in the nucleus. The catalysed reaction is S-ubiquitinyl-[E2 ubiquitin-conjugating enzyme]-L-cysteine + [acceptor protein]-L-lysine = [E2 ubiquitin-conjugating enzyme]-L-cysteine + N(6)-ubiquitinyl-[acceptor protein]-L-lysine.. It functions in the pathway protein modification; protein ubiquitination. E3 ubiquitin-protein ligase. The BRCA1-BARD1 heterodimer specifically mediates the formation of 'Lys-6'-linked polyubiquitin chains and coordinates a diverse range of cellular pathways such as DNA damage repair, ubiquitination and transcriptional regulation to maintain genomic stability. Plays a central role in the control of the cell cycle in response to DNA damage. Acts by mediating ubiquitin E3 ligase activity that is required for its tumor suppressor function. Also forms a heterodimer with CSTF1/CSTF-50 to modulate mRNA processing and RNAP II stability by inhibiting pre-mRNA 3' cleavage. The sequence is that of BRCA1-associated RING domain protein 1 (BARD1) from Homo sapiens (Human).